The primary structure comprises 279 residues: MSAQSKSPTKARRITAPDIRARKGGEPLVCLTAYDAPMARILDPHCDLLLVGDSVGMVVHGLDSTVGVTLDMMILHGQAVMRGARQALVAVDMPFGSYEQSPEQAFANAARVMAETGCQAIKIESGTYAADTIRFMAARSIPVIGHIGLRPQAALADGGFRAKGRTQAERQRVIDEALATAEAGAFAIVIEGVAEDLAREITETVDVPTIGIGASAACDGQILVTQDMLGVFDWTPKFVKRYDNMAERTDAAVAQFASDVRDRSFPSQREVYTMKRSDG.

2 residues coordinate Mg(2+): Asp-53 and Asp-92. Residues 53 to 54 (DS), Asp-92, and Lys-122 each bind 3-methyl-2-oxobutanoate. Glu-124 is a Mg(2+) binding site. Glu-191 acts as the Proton acceptor in catalysis.

Belongs to the PanB family. Homodecamer; pentamer of dimers. It depends on Mg(2+) as a cofactor.

The protein resides in the cytoplasm. The catalysed reaction is 3-methyl-2-oxobutanoate + (6R)-5,10-methylene-5,6,7,8-tetrahydrofolate + H2O = 2-dehydropantoate + (6S)-5,6,7,8-tetrahydrofolate. It functions in the pathway cofactor biosynthesis; (R)-pantothenate biosynthesis; (R)-pantoate from 3-methyl-2-oxobutanoate: step 1/2. In terms of biological role, catalyzes the reversible reaction in which hydroxymethyl group from 5,10-methylenetetrahydrofolate is transferred onto alpha-ketoisovalerate to form ketopantoate. This is 3-methyl-2-oxobutanoate hydroxymethyltransferase from Maricaulis maris (strain MCS10) (Caulobacter maris).